Reading from the N-terminus, the 547-residue chain is Cytochrome P450 monooxygenase fsoD (547 aa).

A helical membrane pass occupies residues 3–23; the sequence is DITLAAVSIGLFFYVGARAVL. C490 is a heme binding site.

The protein belongs to the cytochrome P450 family. Heme serves as cofactor.

The protein localises to the membrane. The catalysed reaction is isomotiol + reduced [NADPH--hemoprotein reductase] + O2 = 2alpha-hydroxyisomotiol + oxidized [NADPH--hemoprotein reductase] + H2O + H(+). It participates in secondary metabolite biosynthesis; terpenoid biosynthesis. In terms of biological role, cytochrome P450 monooxygenase; part of the gene cluster that mediates the biosynthesis of the enfumafungin-type antibiotic, fuscoatroside. Within the pathway, fsoD catalyzes the hydroxylation at position C2 of isomotiol to produce 2-alpha-hydroxy-isomotiol. FsoD may also hydroxylate the intermediates 3-O-(beta-D-glucopyranosyl)-isomotiol and 2-deacetoxy-fuscoatroside at the same position C2. The fuscoatroside biosynthesis is initiated by the cyclization of 2,3(S)-oxidosqualene through FsoA's terpene cyclase (TC) domain, leading to the formation of the fernane skeleton isomotiol, harboring a fernane triterpene skeleton with a C8-C9 double bond. Subsequently, C2-alpha-hydroxylation mediated by fsoD results in the production of 2-alpha-hydroxy-isomotiol, which is further acetylated by fsoF. The glycosyltransferase (GT) domain of FsoA may convert isomotiol, 2-alpha-hydroxy-isomotiol, and the acetylated derivative of 2-alpha-hydroxy-isomotiol into their corresponding glycosides 3-O-(beta-D-glucopyranosyl)-isomotiol, 3-O-(beta-D-glucopyranosyl)-2-alpha-hydroxy-isomotiol, and 3-O-(beta-D-glucopyranosyl)-2-alpha-acetoxy-isomotiol, which then undergo oxidative cleavage under the action of fsoE to form s 2-deacetoxy-fuscoatroside, 2-deacetyl-fuscoatroside, and fuscoatroside, respectively. Although hydroxylation followed by acetylation of 3-O-(beta-D-glucopyranosyl)-isomotiol and 2-deacetoxy-fuscoatroside by fsoD and fsoF could not be ruled out, this process is likely to occur with difficulty due to bulky steric hindrance caused by the presence of a glycan at C3 in these compounds. Interestingly, fsoE can also utilize the aglycones isomotiol and 2-alpha-hydroxy-isomotiol as substrates to generate 19-beta-hydroxy-isomotiol and 2-alpha,19-beta-dihydroxy-isomotiol, respectively. These reactions occur with lower efficiency. Finally, fsoE can further convert 2-alpha,19-beta-dihydroxy-isomotiol into 2-alpha-hydroxy-ismotiol-19-one and 2-alpha-hydroxy-ismotiol-19-one into 2-deacetyl-3-deglucopyranosyl-fuscoatroside. This is Cytochrome P450 monooxygenase fsoD from Humicola fuscoatra.